The chain runs to 349 residues: Sperm acrosomal protein FSA-ACR.1 (349 aa).

The signal sequence occupies residues 1–8; that stretch reads MKEVYLVG. Positions 1-265 are disordered; sequence MKEVYLVGYA…EQPSGIPPSS (265 aa). The segment covering 63–114 has biased composition (basic and acidic residues); sequence TSGEHTSVEHASAEHSSTEHTSGEHASGEHTSGERATGEHTSSEHATSEHTS. Polar residues-rich tracts occupy residues 117-142 and 154-171; these read QPSGEQPSGEKSSGEQPSGEKSSGEQ and SGEQSSGEKSSAEQTSGE. Positions 178–189 are enriched in basic and acidic residues; that stretch reads PSGEHAVAEKPS. A compositionally biased stretch (low complexity) spans 221–248; that stretch reads EQASIEKASSEQASAEQASAEQASSEQA. A glycan (N-linked (GlcNAc...) asparagine) is linked at asparagine 342.

This sequence to acrosomal proteins SP-10. Testis.

The protein localises to the cytoplasmic vesicle. Its subcellular location is the secretory vesicle. It is found in the acrosome. The sequence is that of Sperm acrosomal protein FSA-ACR.1 from Vulpes vulpes (Red fox).